Reading from the N-terminus, the 385-residue chain is 1-deoxy-D-xylulose 5-phosphate reductoisomerase (385 aa).

Positions 10, 11, 12, 13, 37, and 124 each coordinate NADPH. Residue K125 participates in 1-deoxy-D-xylulose 5-phosphate binding. E126 provides a ligand contact to NADPH. D150 lines the Mn(2+) pocket. Residues S151, E152, S176, and H199 each coordinate 1-deoxy-D-xylulose 5-phosphate. Residue E152 participates in Mn(2+) binding. Residue G205 coordinates NADPH. S212, N217, K218, and E221 together coordinate 1-deoxy-D-xylulose 5-phosphate. E221 serves as a coordination point for Mn(2+).

The protein belongs to the DXR family. It depends on Mg(2+) as a cofactor. The cofactor is Mn(2+).

It catalyses the reaction 2-C-methyl-D-erythritol 4-phosphate + NADP(+) = 1-deoxy-D-xylulose 5-phosphate + NADPH + H(+). It participates in isoprenoid biosynthesis; isopentenyl diphosphate biosynthesis via DXP pathway; isopentenyl diphosphate from 1-deoxy-D-xylulose 5-phosphate: step 1/6. Functionally, catalyzes the NADPH-dependent rearrangement and reduction of 1-deoxy-D-xylulose-5-phosphate (DXP) to 2-C-methyl-D-erythritol 4-phosphate (MEP). This chain is 1-deoxy-D-xylulose 5-phosphate reductoisomerase, found in Clostridium botulinum (strain ATCC 19397 / Type A).